Reading from the N-terminus, the 176-residue chain is RNA polymerase sigma factor SigZ (176 aa).

A Polymerase core binding motif is present at residues aspartate 30–leucine 43. The segment at residues glutamine 125–glutamine 144 is a DNA-binding region (H-T-H motif).

Belongs to the sigma-70 factor family. ECF subfamily.

In terms of biological role, sigma factors are initiation factors that promote the attachment of RNA polymerase to specific initiation sites and are then released. The polypeptide is RNA polymerase sigma factor SigZ (sigZ) (Bacillus subtilis (strain 168)).